The chain runs to 971 residues: Exportin-2 (971 aa).

Residues 29 to 102 (AEKYLESVEG…KSSIINLMLR (74 aa)) form the Importin N-terminal domain.

This sequence belongs to the XPO2/CSE1 family.

It is found in the cytoplasm. The protein resides in the nucleus. In terms of biological role, export receptor for importin alpha. Mediates importin-alpha re-export from the nucleus to the cytoplasm after import substrates have been released into the nucleoplasm. This Xenopus laevis (African clawed frog) protein is Exportin-2 (cse1l).